We begin with the raw amino-acid sequence, 534 residues long: Chaperonin GroEL (534 aa).

ATP is bound by residues 29-32, 86-90, Gly413, and Asp494; these read TAGP and DGTTT.

This sequence belongs to the chaperonin (HSP60) family. As to quaternary structure, forms a cylinder of 14 subunits composed of two heptameric rings stacked back-to-back. Interacts with the co-chaperonin GroES.

It is found in the cytoplasm. It carries out the reaction ATP + H2O + a folded polypeptide = ADP + phosphate + an unfolded polypeptide.. In terms of biological role, together with its co-chaperonin GroES, plays an essential role in assisting protein folding. The GroEL-GroES system forms a nano-cage that allows encapsulation of the non-native substrate proteins and provides a physical environment optimized to promote and accelerate protein folding. The protein is Chaperonin GroEL of Mycoplasmoides gallisepticum (strain R(low / passage 15 / clone 2)) (Mycoplasma gallisepticum).